The sequence spans 496 residues: Glycine receptor subunit beta (496 aa).

The N-terminal stretch at 1–22 is a signal peptide; sequence MKFSLAVSFFILMSLLFEDACS. At 23 to 268 the chain is on the extracellular side; sequence KEKSSKKGKG…IFTLRRQVGF (246 aa). N-linked (GlcNAc...) asparagine glycosylation occurs at N54. 2 residues coordinate glycine: R108 and S174. C183 and C197 are disulfide-bonded. The N-linked (GlcNAc...) asparagine glycan is linked to N242. C243 and C255 are oxidised to a cystine. T250 serves as a coordination point for glycine. The helical transmembrane segment at 269 to 289 threads the bilayer; sequence YMMGVYAPTLLIVVLSWLSFW. The Cytoplasmic portion of the chain corresponds to 290–294; the sequence is INPDA. Residues 295-315 traverse the membrane as a helical segment; the sequence is SAARVPLGIFSVLSLASECTT. Residues 316-327 lie on the Extracellular side of the membrane; it reads LAAELPKVSYVK. A helical transmembrane segment spans residues 328 to 349; it reads ALDVWLIACLLFGFASLVEYAV. Residues 350–471 lie on the Cytoplasmic side of the membrane; it reads VQVMLNNPKR…KPVIPTAAKR (122 aa). T391 is subject to Phosphothreonine. Residues 472-495 form a helical membrane-spanning segment; that stretch reads IDLYARALFPFCFLFFNVIYWSIY. L496 is a topological domain (extracellular).

This sequence belongs to the ligand-gated ion channel (TC 1.A.9) family. Glycine receptor (TC 1.A.9.3) subfamily. GLRB sub-subfamily. In terms of assembly, forms heteropentamers with glycin receptor alpha subunits. Heteropentamers with GLRA1 can be composed of two GLRA1 and three GLRB subunits, or three GLRA1 and two GLRB subunits, or four GLRA1 subunits and one GLRB subunit. Forms heteropentamers with GLRA2. Functional GLRB-GLRA2 heteropentamers contain four GLRA2 subunits and one GLRB subunit, although alternative subunit composition cannot be excluded. Forms a heteropentamer with GLRA3. Interacts with GPHN. As to expression, detected in spinal cord and brain stem (at protein level). Detected in spinal cord, cerebellum and brain cortex.

Its subcellular location is the postsynaptic cell membrane. It is found in the cell membrane. It localises to the synapse. The protein localises to the perikaryon. The protein resides in the cell projection. Its subcellular location is the dendrite. It is found in the cytoplasm. It catalyses the reaction chloride(in) = chloride(out). With respect to regulation, channel opening is triggered by extracellular glycine. Heteropentameric channels composed of GLRB and GLRA1 are activated by lower glycine levels than homopentameric GLRA1. In terms of biological role, subunit of heteromeric glycine-gated chloride channels. Plays an important role in the down-regulation of neuronal excitability. Contributes to the generation of inhibitory postsynaptic currents. The polypeptide is Glycine receptor subunit beta (Glrb) (Rattus norvegicus (Rat)).